The sequence spans 565 residues: Oxygen-dependent choline dehydrogenase (565 aa).

Residue 7–36 participates in FAD binding; that stretch reads DYIICGAGSAGNVLATRLTEDPGVTVLLLE. Histidine 474 serves as the catalytic Proton acceptor.

It belongs to the GMC oxidoreductase family. FAD serves as cofactor.

The enzyme catalyses choline + A = betaine aldehyde + AH2. It carries out the reaction betaine aldehyde + NAD(+) + H2O = glycine betaine + NADH + 2 H(+). The protein operates within amine and polyamine biosynthesis; betaine biosynthesis via choline pathway; betaine aldehyde from choline (cytochrome c reductase route): step 1/1. Its function is as follows. Involved in the biosynthesis of the osmoprotectant glycine betaine. Catalyzes the oxidation of choline to betaine aldehyde and betaine aldehyde to glycine betaine at the same rate. The sequence is that of Oxygen-dependent choline dehydrogenase from Burkholderia pseudomallei (strain 1710b).